The following is a 750-amino-acid chain: Photosystem I P700 chlorophyll a apoprotein A1 (750 aa).

Transmembrane regions (helical) follow at residues 70-93 (VFSAHFGQLSIIFLWLSGMYFHGA), 156-179 (LYCTAIGALVFAALMLFAGWFHYH), 195-219 (LNHHLAGLLGLGSLSWAGHQVHVSL), 291-309 (IAHHHLAIAILFLIAGHMY), 346-369 (WHAQLSLNLAMLGSLTIVVAHHMY), 385-411 (LSLFTHHMWIGGFLIVGAAAHAAIFMV), 433-455 (AIISHLNWACIFLGFHSFGLYIH), and 531-549 (FLVHHIHAFTIHVTVLILL). [4Fe-4S] cluster contacts are provided by Cys573 and Cys582. 2 helical membrane-spanning segments follow: residues 589 to 610 (HVFLGLFWMYNSISVVIFHFSW) and 664 to 686 (LSAYGLFFLGAHFVWAFSLMFLF). His675 lines the chlorophyll a' pocket. The chlorophyll a site is built by Met683 and Tyr691. Position 692 (Trp692) interacts with phylloquinone. A helical membrane pass occupies residues 724–744 (AVGVTHYLLGGIATTWAFFLA).

The protein belongs to the PsaA/PsaB family. In terms of assembly, the PsaA/B heterodimer binds the P700 chlorophyll special pair and subsequent electron acceptors. PSI consists of a core antenna complex that captures photons, and an electron transfer chain that converts photonic excitation into a charge separation. The eukaryotic PSI reaction center is composed of at least 11 subunits. It depends on P700 is a chlorophyll a/chlorophyll a' dimer, A0 is one or more chlorophyll a, A1 is one or both phylloquinones and FX is a shared 4Fe-4S iron-sulfur center. as a cofactor.

The protein resides in the plastid. It localises to the chloroplast thylakoid membrane. The enzyme catalyses reduced [plastocyanin] + hnu + oxidized [2Fe-2S]-[ferredoxin] = oxidized [plastocyanin] + reduced [2Fe-2S]-[ferredoxin]. PsaA and PsaB bind P700, the primary electron donor of photosystem I (PSI), as well as the electron acceptors A0, A1 and FX. PSI is a plastocyanin-ferredoxin oxidoreductase, converting photonic excitation into a charge separation, which transfers an electron from the donor P700 chlorophyll pair to the spectroscopically characterized acceptors A0, A1, FX, FA and FB in turn. Oxidized P700 is reduced on the lumenal side of the thylakoid membrane by plastocyanin. This is Photosystem I P700 chlorophyll a apoprotein A1 from Jasminum nudiflorum (Winter jasmine).